The following is an 88-amino-acid chain: Small ribosomal subunit protein uS15 (88 aa).

The protein belongs to the universal ribosomal protein uS15 family. Part of the 30S ribosomal subunit. Forms a bridge to the 50S subunit in the 70S ribosome, contacting the 23S rRNA.

Functionally, one of the primary rRNA binding proteins, it binds directly to 16S rRNA where it helps nucleate assembly of the platform of the 30S subunit by binding and bridging several RNA helices of the 16S rRNA. Its function is as follows. Forms an intersubunit bridge (bridge B4) with the 23S rRNA of the 50S subunit in the ribosome. This Leptospira biflexa serovar Patoc (strain Patoc 1 / Ames) protein is Small ribosomal subunit protein uS15.